We begin with the raw amino-acid sequence, 191 residues long: UPF0302 protein SA1295 (191 aa).

The protein belongs to the UPF0302 family.

The chain is UPF0302 protein SA1295 from Staphylococcus aureus (strain N315).